A 119-amino-acid polypeptide reads, in one-letter code: Large ribosomal subunit protein uL18 (119 aa).

This sequence belongs to the universal ribosomal protein uL18 family. Part of the 50S ribosomal subunit; part of the 5S rRNA/L5/L18/L25 subcomplex. Contacts the 5S and 23S rRNAs.

In terms of biological role, this is one of the proteins that bind and probably mediate the attachment of the 5S RNA into the large ribosomal subunit, where it forms part of the central protuberance. This is Large ribosomal subunit protein uL18 from Clostridium beijerinckii (strain ATCC 51743 / NCIMB 8052) (Clostridium acetobutylicum).